The sequence spans 581 residues: Pyridine nucleotide-disulfide oxidoreductase domain-containing protein 2 (581 aa).

38–71 is a binding site for FAD; sequence VVIGAGHNGLVAAAYLQRLGVNTAVFERRHVIGG.

This sequence belongs to the carotenoid/retinoid oxidoreductase family. As to quaternary structure, interacts with COX5B; this interaction may contribute to localize PYROXD2 to the inner face of the inner mitochondrial membrane.

The protein resides in the mitochondrion matrix. In terms of biological role, probable oxidoreductase that may play a role as regulator of mitochondrial function. This Homo sapiens (Human) protein is Pyridine nucleotide-disulfide oxidoreductase domain-containing protein 2.